A 399-amino-acid chain; its full sequence is Elongation factor Tu (399 aa).

Residues 10-209 (KPHVNIGTIG…EVDAYIPTPE (200 aa)) enclose the tr-type G domain. A G1 region spans residues 19 to 26 (GHVDHGKT). A GTP-binding site is contributed by 19–26 (GHVDHGKT). Threonine 26 provides a ligand contact to Mg(2+). The interval 60–64 (GITIA) is G2. A G3 region spans residues 81–84 (DCPG). GTP-binding positions include 81 to 85 (DCPGH) and 136 to 139 (NKQD). Residues 136–139 (NKQD) form a G4 region. The tract at residues 174 to 176 (SAL) is G5.

This sequence belongs to the TRAFAC class translation factor GTPase superfamily. Classic translation factor GTPase family. EF-Tu/EF-1A subfamily. As to quaternary structure, monomer.

It is found in the cytoplasm. It carries out the reaction GTP + H2O = GDP + phosphate + H(+). Functionally, GTP hydrolase that promotes the GTP-dependent binding of aminoacyl-tRNA to the A-site of ribosomes during protein biosynthesis. This is Elongation factor Tu from Helicobacter pylori (strain ATCC 700392 / 26695) (Campylobacter pylori).